We begin with the raw amino-acid sequence, 944 residues long: Protein translocase subunit SecA (944 aa).

Residues Q77, 95–99 (GEGKT), and D484 each bind ATP. Residues 920–944 (EQEKQTKKKKKKKPHDDETTKVKIG) form a disordered region. Residues 933 to 944 (PHDDETTKVKIG) are compositionally biased toward basic and acidic residues.

The protein belongs to the SecA family. As to quaternary structure, monomer and homodimer. Part of the essential Sec protein translocation apparatus which comprises SecA, SecYEG and auxiliary proteins SecDF. Other proteins may also be involved.

Its subcellular location is the cell membrane. It is found in the cytoplasm. It catalyses the reaction ATP + H2O + cellular proteinSide 1 = ADP + phosphate + cellular proteinSide 2.. Part of the Sec protein translocase complex. Interacts with the SecYEG preprotein conducting channel. Has a central role in coupling the hydrolysis of ATP to the transfer of proteins into and across the cell membrane, serving as an ATP-driven molecular motor driving the stepwise translocation of polypeptide chains across the membrane. The protein is Protein translocase subunit SecA of Mycoplasma capricolum subsp. capricolum (strain California kid / ATCC 27343 / NCTC 10154).